The sequence spans 256 residues: Small ribosomal subunit protein eS1B (256 aa).

An N-acetylalanine; partial modification is found at Ala-2.

Belongs to the eukaryotic ribosomal protein eS1 family. In terms of assembly, component of the small ribosomal subunit. Mature ribosomes consist of a small (40S) and a large (60S) subunit. The 40S subunit contains about 33 different proteins and 1 molecule of RNA (18S). The 60S subunit contains about 49 different proteins and 3 molecules of RNA (25S, 5.8S and 5S).

The protein resides in the cytoplasm. The chain is Small ribosomal subunit protein eS1B from Clavispora lusitaniae (strain ATCC 42720) (Yeast).